We begin with the raw amino-acid sequence, 1167 residues long: Non-toxic nonhemagglutinin (1167 aa).

Positions 1 to 381 (MDIIDNVDIT…PQQIINLIDN (381 aa)) are light chain nLC. Positions 382–804 (NNILLIKSYI…LFNSKIQLTI (423 aa)) are N-heavy chain nHN. A C-heavy chain nHC region spans residues 805-1167 (KNEKPEYNLL…LNDIYSWTLI (363 aa)).

The protein belongs to the botulism non-toxic nonhemagglutinin family.

Functionally, expression of the ptox operon (ntnh-orfX1-orfX2-orfX3-pmp1) in B.thuringiensis kills Anopheles but not Aedes mosquito 3rd instar larvae. The ntnh-pmp1 construct is about half as toxic. The polypeptide is Non-toxic nonhemagglutinin (Paraclostridium bifermentans (Clostridium bifermentans)).